The primary structure comprises 741 residues: NAD(P)H-quinone oxidoreductase subunit 5, chloroplastic (741 aa).

16 helical membrane passes run 9-29 (WVIP…LFFI), 39-59 (IWAF…IQLS), 89-109 (IDPL…LVLI), 125-145 (FVYI…SNLI), 147-167 (IYFF…FWFT), 185-205 (GDFG…SLEF), 219-239 (NGIN…GAVA), 258-278 (TPIS…FLLA), 280-300 (LFPL…VGTI), 327-347 (LGYM…FHLI), 354-374 (ALLF…VGYS), 396-416 (TTFL…CFWS), 425-445 (WLYS…TAFY), 542-562 (LFPL…GISF), 605-625 (AISS…LYGS), and 721-741 (ISSY…FFIS).

This sequence belongs to the complex I subunit 5 family. As to quaternary structure, NDH is composed of at least 16 different subunits, 5 of which are encoded in the nucleus.

It localises to the plastid. Its subcellular location is the chloroplast thylakoid membrane. The catalysed reaction is a plastoquinone + NADH + (n+1) H(+)(in) = a plastoquinol + NAD(+) + n H(+)(out). It catalyses the reaction a plastoquinone + NADPH + (n+1) H(+)(in) = a plastoquinol + NADP(+) + n H(+)(out). In terms of biological role, NDH shuttles electrons from NAD(P)H:plastoquinone, via FMN and iron-sulfur (Fe-S) centers, to quinones in the photosynthetic chain and possibly in a chloroplast respiratory chain. The immediate electron acceptor for the enzyme in this species is believed to be plastoquinone. Couples the redox reaction to proton translocation, and thus conserves the redox energy in a proton gradient. This is NAD(P)H-quinone oxidoreductase subunit 5, chloroplastic (ndhF) from Lolium perenne (Perennial ryegrass).